The primary structure comprises 391 residues: Ferrochelatase (391 aa).

Fe cation contacts are provided by His196 and Glu281.

This sequence belongs to the ferrochelatase family.

It is found in the cytoplasm. It carries out the reaction heme b + 2 H(+) = protoporphyrin IX + Fe(2+). The protein operates within porphyrin-containing compound metabolism; protoheme biosynthesis; protoheme from protoporphyrin-IX: step 1/1. Functionally, catalyzes the ferrous insertion into protoporphyrin IX. The polypeptide is Ferrochelatase (Synechococcus sp. (strain CC9605)).